We begin with the raw amino-acid sequence, 211 residues long: Thiamine-phosphate synthase (211 aa).

4-amino-2-methyl-5-(diphosphooxymethyl)pyrimidine is bound by residues 37 to 41 (QLRIK) and Asn69. Residues Asp70 and Asp89 each coordinate Mg(2+). Ser108 lines the 4-amino-2-methyl-5-(diphosphooxymethyl)pyrimidine pocket. 134–136 (TQT) contributes to the 2-[(2R,5Z)-2-carboxy-4-methylthiazol-5(2H)-ylidene]ethyl phosphate binding site. Lys137 is a binding site for 4-amino-2-methyl-5-(diphosphooxymethyl)pyrimidine. Residues Gly166 and 186–187 (VS) contribute to the 2-[(2R,5Z)-2-carboxy-4-methylthiazol-5(2H)-ylidene]ethyl phosphate site.

This sequence belongs to the thiamine-phosphate synthase family. Mg(2+) serves as cofactor.

The enzyme catalyses 2-[(2R,5Z)-2-carboxy-4-methylthiazol-5(2H)-ylidene]ethyl phosphate + 4-amino-2-methyl-5-(diphosphooxymethyl)pyrimidine + 2 H(+) = thiamine phosphate + CO2 + diphosphate. It catalyses the reaction 2-(2-carboxy-4-methylthiazol-5-yl)ethyl phosphate + 4-amino-2-methyl-5-(diphosphooxymethyl)pyrimidine + 2 H(+) = thiamine phosphate + CO2 + diphosphate. The catalysed reaction is 4-methyl-5-(2-phosphooxyethyl)-thiazole + 4-amino-2-methyl-5-(diphosphooxymethyl)pyrimidine + H(+) = thiamine phosphate + diphosphate. The protein operates within cofactor biosynthesis; thiamine diphosphate biosynthesis; thiamine phosphate from 4-amino-2-methyl-5-diphosphomethylpyrimidine and 4-methyl-5-(2-phosphoethyl)-thiazole: step 1/1. Its function is as follows. Condenses 4-methyl-5-(beta-hydroxyethyl)thiazole monophosphate (THZ-P) and 2-methyl-4-amino-5-hydroxymethyl pyrimidine pyrophosphate (HMP-PP) to form thiamine monophosphate (TMP). The protein is Thiamine-phosphate synthase of Escherichia coli O157:H7.